Here is a 37-residue protein sequence, read N- to C-terminus: MKVRASVKKICSDCKVYKRNGVVRVSCKVKKHKQRQG.

This sequence belongs to the bacterial ribosomal protein bL36 family.

The chain is Large ribosomal subunit protein bL36 from Desulfotalea psychrophila (strain LSv54 / DSM 12343).